The primary structure comprises 818 residues: FAD-dependent monooxygenase anuJ (818 aa).

FAD is bound by residues glutamate 46, alanine 60, arginine 122, aspartate 329, and glycine 342. 3 consecutive transmembrane segments (helical) span residues 471–491 (VLWALPLLGMAVAGLLTMFSV), 539–559 (FFYQPFSFFADYGVWYGIMLV), and 571–591 (LSFALLWGMLNMWGIAIFVPI). Asparagine 614 carries N-linked (GlcNAc...) asparagine glycosylation. 2 helical membrane passes run 621–641 (ILPVLLATHYATFMDAYLSPV) and 647–667 (AAGFLWELFPVWLSLAQAGLA). The N-linked (GlcNAc...) asparagine glycan is linked to asparagine 683. 2 consecutive transmembrane segments (helical) span residues 743–763 (WDQVFFAIPNLFWIILLFADL) and 778–798 (FSALGLIIAGGNGTMLGLMWL).

This sequence belongs to the paxM FAD-dependent monooxygenase family.

It is found in the membrane. In terms of biological role, highly reducing polyketide synthase; part of the gene cluster that mediates the biosynthesis of annullatin D, an alkylated aromatic polyketide with a fused dihydrobenzofuran lactone ring system that exhibits potent agonistic activities toward the cannabinoid receptors. AnuJ does not seem to play a role within the pathway. The annullatin backbone 2-hydroxymethyl-3-pentylphenol is assembled from one acetyl-CoA starter unit and 5 malonyl-CoA elongation units by cooperation of the highly reducing polyketide synthase anuA, the short-chain dehydrogenase anuB and the oxidoreductase anuC, before being hydroxylated at the C-5 alkyl chain by the cytochrome P450 monooxygenase anuE to form (8S)-annullatin E. The prenyltransferase anuH subsequently installs one isoprenyl group at the benzene ring to form (8S)-annullatin J. Enzymatic or nonenzymatic dihydro-benzofuran ring formation between the prenyl and the phenolic hydroxyl groups in (8S)-annullatin J results in two diastereomers (2S,9S)-annullatin H and compound 12. The intermediate (2S,9S)-annullatin H is then converted to (2S,9S)-annullatin D by the FAD-linked oxidoreductase anuG-catalyzed five-member lactone ring formation. The isomer 12 acts as a substrate for the short-chain dehydrogenase anuF and is oxidized to (2R)-annullatin F, which is subsequently acetylated by an acetyltransferase leading to (2R)-annullatin G formation. The remaining enzymes identified within the cluster, anuD, anuI and anuJ, seem not to be involved in annullatin biosynthesis. The sequence is that of FAD-dependent monooxygenase anuJ from Penicillium roqueforti (strain FM164).